A 445-amino-acid chain; its full sequence is Phosphoglucosamine mutase (445 aa).

S102 acts as the Phosphoserine intermediate in catalysis. S102, D241, D243, and D245 together coordinate Mg(2+). S102 carries the phosphoserine modification.

This sequence belongs to the phosphohexose mutase family. Mg(2+) serves as cofactor. Activated by phosphorylation.

It carries out the reaction alpha-D-glucosamine 1-phosphate = D-glucosamine 6-phosphate. Its function is as follows. Catalyzes the conversion of glucosamine-6-phosphate to glucosamine-1-phosphate. This is Phosphoglucosamine mutase from Escherichia coli (strain 55989 / EAEC).